Reading from the N-terminus, the 481-residue chain is Cardiolipin synthase A (481 aa).

The next 2 membrane-spanning stretches (helical) occupy residues 10-30 (FFGY…LHAL) and 40-60 (IAWA…YLIF). 2 PLD phosphodiesterase domains span residues 220-247 (VNFR…GDEY) and 394-421 (QPGF…DNRS). Residues H225, K227, D232, H399, K401, and D406 contribute to the active site.

This sequence belongs to the phospholipase D family. Cardiolipin synthase subfamily. ClsA sub-subfamily.

Its subcellular location is the cell inner membrane. It carries out the reaction 2 a 1,2-diacyl-sn-glycero-3-phospho-(1'-sn-glycerol) = a cardiolipin + glycerol. Catalyzes the reversible phosphatidyl group transfer from one phosphatidylglycerol molecule to another to form cardiolipin (CL) (diphosphatidylglycerol) and glycerol. In Pseudomonas putida (strain ATCC 47054 / DSM 6125 / CFBP 8728 / NCIMB 11950 / KT2440), this protein is Cardiolipin synthase A.